The chain runs to 536 residues: MKVAVAGCCHGALDKMYETLELLQRRHNVRPDLLLCCGDFQAVRNEADLRCMAVPAKYRHMQTFYRYYSGEKKAPVLTVFIGGNHEASNHLQELPYGGWVAPNIYYLGYAGVVRFRGVRIGGISGIFKSHDYRKGHFECPPYNQQTIRSAYHVRNIEVFKLKQLKHPMDIFMSHDWPQSIYHYGNKKQLLKMKSFFRQEVESNTLGSPAASELLQHLKPNYWFSAHLHVKFAAFMQHETKSKEELPKATKFLALDKCLPHRDFLQIIDIEHDPTAGDSLEYDAEWIAVLKATNSLINVTQSSWSVPENNGLHAKWDYSATEEAIKEVLEELNHNLKIPCNFTLTTTCYDPSKPQKNMEPVHTINPQTTEFCAQFGLTDINDRIQQVKEEGSVRGEYEEEEEEMDSSGSAEEPSEYNTDNSGLSSINPDEIMLDDEGGDEDLSTCSVDPSPDHPPEFSASFSDIRIMPDSMAVSSDDAMDSTNEELEKSGVNKQVEEKSLNERPLKRVGGSENGNSGIKIKRRNQAIYAAEDEDEAK.

4 residues coordinate a divalent metal cation: Cys8, His10, Asp39, and Asn84. The tract at residues 124–154 (SGIFKSHDYRKGHFECPPYNQQTIRSAYHVR) is lariat recognition loop. Positions 174, 226, and 228 each coordinate a divalent metal cation. Positions 388 to 536 (EEGSVRGEYE…YAAEDEDEAK (149 aa)) are disordered. Polar residues predominate over residues 414-426 (EYNTDNSGLSSIN). Acidic residues predominate over residues 430 to 441 (IMLDDEGGDEDL). Residues 484-504 (ELEKSGVNKQVEEKSLNERPL) are compositionally biased toward basic and acidic residues.

The protein belongs to the lariat debranching enzyme family. Requires Fe(2+) as cofactor. Zn(2+) is required as a cofactor. It depends on Mn(2+) as a cofactor.

It is found in the nucleus. Its activity is regulated as follows. Active in presence of diverse metals including Fe(2+), Zn(2+), Mn(2+). Also activated by Ca(2+). Binds two metal cations in two adjacent alpha and beta metal-binding pockets. Its function is as follows. Cleaves the 2'-5' phosphodiester linkage at the branch point of excised lariat intron RNA and converts them into linear molecules that can be subsequently degraded, thereby facilitating ribonucleotide turnover. Linked to its role in pre-mRNA processing mechanism, may also participate in retrovirus replication and have an antiviral cell-intrinsic defense function. The chain is Lariat debranching enzyme (DBR1) from Gallus gallus (Chicken).